The chain runs to 421 residues: Gamma-glutamyl phosphate reductase (421 aa).

It belongs to the gamma-glutamyl phosphate reductase family.

The protein localises to the cytoplasm. The catalysed reaction is L-glutamate 5-semialdehyde + phosphate + NADP(+) = L-glutamyl 5-phosphate + NADPH + H(+). The protein operates within amino-acid biosynthesis; L-proline biosynthesis; L-glutamate 5-semialdehyde from L-glutamate: step 2/2. Functionally, catalyzes the NADPH-dependent reduction of L-glutamate 5-phosphate into L-glutamate 5-semialdehyde and phosphate. The product spontaneously undergoes cyclization to form 1-pyrroline-5-carboxylate. The polypeptide is Gamma-glutamyl phosphate reductase (Acinetobacter baumannii (strain ACICU)).